The sequence spans 698 residues: DNA ligase (698 aa).

Residues 35 to 39 (DSVYD), 84 to 85 (SL), and E123 each bind NAD(+). Catalysis depends on K125, which acts as the N6-AMP-lysine intermediate. NAD(+)-binding residues include R146, E183, K302, and K326. 4 residues coordinate Zn(2+): C420, C423, C438, and C443. The BRCT domain occupies 612-698 (NGKGHLNGQT…QNSADTIHLL (87 aa)).

The protein belongs to the NAD-dependent DNA ligase family. LigA subfamily. Requires Mg(2+) as cofactor. Mn(2+) is required as a cofactor.

The enzyme catalyses NAD(+) + (deoxyribonucleotide)n-3'-hydroxyl + 5'-phospho-(deoxyribonucleotide)m = (deoxyribonucleotide)n+m + AMP + beta-nicotinamide D-nucleotide.. DNA ligase that catalyzes the formation of phosphodiester linkages between 5'-phosphoryl and 3'-hydroxyl groups in double-stranded DNA using NAD as a coenzyme and as the energy source for the reaction. It is essential for DNA replication and repair of damaged DNA. The protein is DNA ligase of Synechococcus sp. (strain WH7803).